The chain runs to 506 residues: Probable Xaa-Pro aminopeptidase BDBG_08406 (506 aa).

4 residues coordinate Mn(2+): D285, D296, E433, and E471.

The protein belongs to the peptidase M24B family. The cofactor is Mn(2+).

The catalysed reaction is Release of any N-terminal amino acid, including proline, that is linked to proline, even from a dipeptide or tripeptide.. Catalyzes the removal of a penultimate prolyl residue from the N-termini of peptides. This Blastomyces gilchristii (strain SLH14081) (Blastomyces dermatitidis) protein is Probable Xaa-Pro aminopeptidase BDBG_08406.